The sequence spans 450 residues: MENIHDLWNRVLGEIEKKISKPSFETWLKSTKAHSLRGDTLVIIAPNEFARDWLDSRYSRLIAETIYDITGEELLIKFITPPNQSEDDFEFQRSSKKHRKPYEESTDFPQSMLNPKYTFDTFVIGSGNRFAHAASLAVAEAPAKAYNPLFIYGGVGLGKTHLMHAIGHYVIEHNPSAKVVYLSSEKFTNEFINAIRDNRPDDFRNKYRNVDVLLIDDIQFLAGKEQTQEEFFHTFNTLHEESKQIVISSDRPPKEIPTLEDRLRSRFEWGLITDITPPDLETRIAILRKKAKAEGFDIPNEVMLYIANQIDSNIRELEGALIRVVAYSSLINKEITADLAAEALKDIIPSTKPKVITIQDIQRVVGQHFNIKLEDFKAKKRTKSVAFPRQIAMYLSRELTDCSLPKIGDEFGGRDHTTVIHAHEKISKLLQTDAQLQKHIKEIEEKLKQL.

The segment at Met1 to Ile79 is domain I, interacts with DnaA modulators. The interval Ile79–Ser111 is domain II. The domain III, AAA+ region stretch occupies residues Met112–Ser328. Residues Gly156, Gly158, Lys159, and Thr160 each coordinate ATP. A domain IV, binds dsDNA region spans residues Ser329–Leu450.

This sequence belongs to the DnaA family. As to quaternary structure, oligomerizes as a right-handed, spiral filament on DNA at oriC.

The protein resides in the cytoplasm. Functionally, plays an essential role in the initiation and regulation of chromosomal replication. ATP-DnaA binds to the origin of replication (oriC) to initiate formation of the DNA replication initiation complex once per cell cycle. Binds the DnaA box (a 9 base pair repeat at the origin) and separates the double-stranded (ds)DNA. Forms a right-handed helical filament on oriC DNA; dsDNA binds to the exterior of the filament while single-stranded (ss)DNA is stabiized in the filament's interior. The ATP-DnaA-oriC complex binds and stabilizes one strand of the AT-rich DNA unwinding element (DUE), permitting loading of DNA polymerase. After initiation quickly degrades to an ADP-DnaA complex that is not apt for DNA replication. Binds acidic phospholipids. The protein is Chromosomal replication initiator protein DnaA of Geobacillus sp. (strain WCH70).